A 604-amino-acid chain; its full sequence is Glutamine--fructose-6-phosphate aminotransferase [isomerizing] (604 aa).

The Nucleophile; for GATase activity role is filled by Cys2. The Glutamine amidotransferase type-2 domain occupies 2–218; the sequence is CGIVGVVGNR…DKELVVLTKD (217 aa). SIS domains are found at residues 284 to 423 and 456 to 594; these read IVKS…ANGK and VANL…VDKP. Lys599 acts as the For Fru-6P isomerization activity in catalysis.

As to quaternary structure, homodimer.

Its subcellular location is the cytoplasm. It carries out the reaction D-fructose 6-phosphate + L-glutamine = D-glucosamine 6-phosphate + L-glutamate. Functionally, catalyzes the first step in hexosamine metabolism, converting fructose-6P into glucosamine-6P using glutamine as a nitrogen source. The protein is Glutamine--fructose-6-phosphate aminotransferase [isomerizing] of Streptococcus mutans serotype c (strain ATCC 700610 / UA159).